Here is a 225-residue protein sequence, read N- to C-terminus: Thymidylate kinase (225 aa).

An ATP-binding site is contributed by 10–17 (GGEGAGKT).

The protein belongs to the thymidylate kinase family.

The enzyme catalyses dTMP + ATP = dTDP + ADP. Functionally, phosphorylation of dTMP to form dTDP in both de novo and salvage pathways of dTTP synthesis. This chain is Thymidylate kinase, found in Oceanobacillus iheyensis (strain DSM 14371 / CIP 107618 / JCM 11309 / KCTC 3954 / HTE831).